The following is a 606-amino-acid chain: Threonine--tRNA ligase (606 aa).

The interval Asp-212 to Pro-503 is catalytic. Residues Cys-304, His-355, and His-480 each coordinate Zn(2+).

Belongs to the class-II aminoacyl-tRNA synthetase family. As to quaternary structure, homodimer. Requires Zn(2+) as cofactor.

The protein localises to the cytoplasm. The enzyme catalyses tRNA(Thr) + L-threonine + ATP = L-threonyl-tRNA(Thr) + AMP + diphosphate + H(+). Catalyzes the attachment of threonine to tRNA(Thr) in a two-step reaction: L-threonine is first activated by ATP to form Thr-AMP and then transferred to the acceptor end of tRNA(Thr). Also edits incorrectly charged L-seryl-tRNA(Thr). The chain is Threonine--tRNA ligase from Campylobacter concisus (strain 13826).